We begin with the raw amino-acid sequence, 414 residues long: Phthiocerol/phthiodiolone dimycocerosyl transferase (414 aa).

Histidine 118 (proton acceptor) is an active-site residue.

Belongs to the acyltransferase PapA5 family. Monomer. Interacts directly with the acyl carrier protein (ACP) domain of the mycocerosic acid synthase (mas) protein.

The enzyme catalyses 2 a mycocerosyl-[mycocerosic acid synthase] + a phthiocerol = a dimycocerosyl phthiocerol + 2 holo-[mycocerosic acid synthase].. It catalyses the reaction 2 a mycocerosyl-[mycocerosic acid synthase] + a phthiodiolone = a dimycocerosyl phthiodiolone + 2 holo-[mycocerosic acid synthase].. It carries out the reaction 2 a mycocerosyl-[mycocerosic acid synthase] + a phenolphthiocerol = a dimycocerosyl phenolphthiocerol + 2 holo-[mycocerosic acid synthase].. Functionally, catalyzes diesterification of phthiocerol, phthiodiolone, and phenolphthiocerol with mycocerosic acids, the final step in the phthiocerol, phthiodiolone and phenolphthiocerol dimycocerosate esters (PDIM) synthesis. Can directly transfer the mycocerosate bound to the mycocerosic acid synthase (mas) onto the substrate alcohols. This Mycobacterium ulcerans (strain Agy99) protein is Phthiocerol/phthiodiolone dimycocerosyl transferase (papA5).